The primary structure comprises 107 residues: Nucleoid-associated protein A1I_00660 (107 aa).

The interval 81 to 107 (KCDSDSQNSMSGALSGMSLPPGFKMPF) is disordered.

This sequence belongs to the YbaB/EbfC family. In terms of assembly, homodimer.

It is found in the cytoplasm. Its subcellular location is the nucleoid. In terms of biological role, binds to DNA and alters its conformation. May be involved in regulation of gene expression, nucleoid organization and DNA protection. The chain is Nucleoid-associated protein A1I_00660 from Rickettsia bellii (strain OSU 85-389).